The chain runs to 391 residues: Terminal nucleotidyltransferase 5C (391 aa).

The protein belongs to the TENT family. In terms of assembly, interacts with BCCIP and PABPC1; the interaction has no effect on TENT5C poly(A) polymerase function. Interacts with PLK4; this interaction leads to the TENT5C recruitment into the centrosome.

It localises to the nucleus. Its subcellular location is the cytoplasm. The protein resides in the cytoskeleton. The protein localises to the microtubule organizing center. It is found in the centrosome. It catalyses the reaction RNA(n) + ATP = RNA(n)-3'-adenine ribonucleotide + diphosphate. Its function is as follows. Catalyzes the transfer of one adenosine molecule from an ATP to an mRNA poly(A) tail bearing a 3'-OH terminal group and enhances mRNA stability and gene expression. Can also elongate RNA oligos ending with uridine molecule, provided that the sequence is adenosine-rich. Mainly targets mRNAs encoding endoplasmic reticulum-targeted protein. Functionally, (Microbial infection) Seems to enhance replication of some viruses, including yellow fever virus, in response to type I interferon. The polypeptide is Terminal nucleotidyltransferase 5C (Homo sapiens (Human)).